A 475-amino-acid polypeptide reads, in one-letter code: Ribulose bisphosphate carboxylase large chain (475 aa).

Positions 1 to 2 (MA) are excised as a propeptide. At P3 the chain carries N-acetylproline. Residue K14 is modified to N6,N6,N6-trimethyllysine. Residues N123 and T173 each contribute to the substrate site. The active-site Proton acceptor is the K175. K177 contributes to the substrate binding site. Residues K201, D203, and E204 each coordinate Mg(2+). An N6-carboxylysine modification is found at K201. H294 (proton acceptor) is an active-site residue. Substrate is bound by residues R295, H327, and S379.

It belongs to the RuBisCO large chain family. Type I subfamily. As to quaternary structure, heterohexadecamer of 8 large chains and 8 small chains. Requires Mg(2+) as cofactor.

Its subcellular location is the plastid. It is found in the chloroplast. It catalyses the reaction 2 (2R)-3-phosphoglycerate + 2 H(+) = D-ribulose 1,5-bisphosphate + CO2 + H2O. The enzyme catalyses D-ribulose 1,5-bisphosphate + O2 = 2-phosphoglycolate + (2R)-3-phosphoglycerate + 2 H(+). Functionally, ruBisCO catalyzes two reactions: the carboxylation of D-ribulose 1,5-bisphosphate, the primary event in carbon dioxide fixation, as well as the oxidative fragmentation of the pentose substrate in the photorespiration process. Both reactions occur simultaneously and in competition at the same active site. This is Ribulose bisphosphate carboxylase large chain from Nephroselmis olivacea (Green alga).